Consider the following 382-residue polypeptide: POU domain, class 3, transcription factor 2-A (382 aa).

3 disordered regions span residues 69–136 (PWAT…SSNG), 150–206 (GMIN…TPTS), and 348–382 (EKRM…TSVQ). The span at 122-136 (STGSTHLSSMASSNG) shows a compositional bias: polar residues. Residues 165-178 (LRDSHDDHHGDHGH) are compositionally biased toward basic and acidic residues. Positions 179-194 (QQVSQAQQQHSQLQGG) are enriched in low complexity. Residues 201-275 (EDTPTSDDLE…LLNKWLEEAD (75 aa)) form the POU-specific domain. The segment at residues 293 to 352 (KRKKRTSIEVSVKGALESHFLKCPKPSAPEITSLADSLQLEKEVVRVWFCNRRQKEKRMT) is a DNA-binding region (homeobox).

The protein belongs to the POU transcription factor family. Class-3 subfamily. In terms of tissue distribution, expressed in the developing brain and spinal cord. Also found in a restricted region of the auditory vesicle during development. In the adult, expression is restricted to the brain.

The protein localises to the nucleus. In terms of biological role, transcription factor that may be implicated in patterning of the central nervous system during early development. The polypeptide is POU domain, class 3, transcription factor 2-A (pou3f2-a) (Xenopus laevis (African clawed frog)).